The chain runs to 417 residues: Serine--tRNA ligase (417 aa).

Residue 225-227 coordinates L-serine; it reads TLE. 256–258 lines the ATP pocket; it reads RQE. Residue E279 participates in L-serine binding. An ATP-binding site is contributed by 343–346; that stretch reads EVSS. T379 lines the L-serine pocket.

The protein belongs to the class-II aminoacyl-tRNA synthetase family. Type-1 seryl-tRNA synthetase subfamily. As to quaternary structure, homodimer. The tRNA molecule binds across the dimer.

It is found in the cytoplasm. It carries out the reaction tRNA(Ser) + L-serine + ATP = L-seryl-tRNA(Ser) + AMP + diphosphate + H(+). It catalyses the reaction tRNA(Sec) + L-serine + ATP = L-seryl-tRNA(Sec) + AMP + diphosphate + H(+). Its pathway is aminoacyl-tRNA biosynthesis; selenocysteinyl-tRNA(Sec) biosynthesis; L-seryl-tRNA(Sec) from L-serine and tRNA(Sec): step 1/1. Its function is as follows. Catalyzes the attachment of serine to tRNA(Ser). Is also able to aminoacylate tRNA(Sec) with serine, to form the misacylated tRNA L-seryl-tRNA(Sec), which will be further converted into selenocysteinyl-tRNA(Sec). In Mycoplasma genitalium (strain ATCC 33530 / DSM 19775 / NCTC 10195 / G37) (Mycoplasmoides genitalium), this protein is Serine--tRNA ligase.